Here is a 1054-residue protein sequence, read N- to C-terminus: DNA-directed RNA polymerase subunit beta' (1054 aa).

3 residues coordinate Mg(2+): D383, D385, and D387. Zn(2+) is bound by residues C752, C826, C833, and C836.

Belongs to the RNA polymerase beta' chain family. The RNAP catalytic core consists of 2 alpha, 1 beta, 1 beta' and 1 omega subunit. When a sigma factor is associated with the core the holoenzyme is formed, which can initiate transcription. The cofactor is Mg(2+). Requires Zn(2+) as cofactor.

The catalysed reaction is RNA(n) + a ribonucleoside 5'-triphosphate = RNA(n+1) + diphosphate. DNA-dependent RNA polymerase catalyzes the transcription of DNA into RNA using the four ribonucleoside triphosphates as substrates. The chain is DNA-directed RNA polymerase subunit beta' from Weissella paramesenteroides (Leuconostoc paramesenteroides).